The chain runs to 155 residues: Small ribosomal subunit protein uS7 (155 aa).

This sequence belongs to the universal ribosomal protein uS7 family. In terms of assembly, part of the 30S ribosomal subunit. Contacts proteins S9 and S11.

One of the primary rRNA binding proteins, it binds directly to 16S rRNA where it nucleates assembly of the head domain of the 30S subunit. Is located at the subunit interface close to the decoding center, probably blocks exit of the E-site tRNA. The sequence is that of Small ribosomal subunit protein uS7 from Sulfurovum sp. (strain NBC37-1).